Here is a 388-residue protein sequence, read N- to C-terminus: Succinate--CoA ligase [ADP-forming] subunit beta (388 aa).

An ATP-grasp domain is found at 9-244 (KSLFAEYGLP…PSQDDAREAH (236 aa)). ATP contacts are provided by residues Lys46, 53–55 (GRG), Glu99, Thr102, and Glu107. Mg(2+) contacts are provided by Asn199 and Asp213. Substrate is bound by residues Asn264 and 321–323 (GIV).

Belongs to the succinate/malate CoA ligase beta subunit family. Heterotetramer of two alpha and two beta subunits. It depends on Mg(2+) as a cofactor.

It catalyses the reaction succinate + ATP + CoA = succinyl-CoA + ADP + phosphate. The enzyme catalyses GTP + succinate + CoA = succinyl-CoA + GDP + phosphate. It functions in the pathway carbohydrate metabolism; tricarboxylic acid cycle; succinate from succinyl-CoA (ligase route): step 1/1. Succinyl-CoA synthetase functions in the citric acid cycle (TCA), coupling the hydrolysis of succinyl-CoA to the synthesis of either ATP or GTP and thus represents the only step of substrate-level phosphorylation in the TCA. The beta subunit provides nucleotide specificity of the enzyme and binds the substrate succinate, while the binding sites for coenzyme A and phosphate are found in the alpha subunit. The sequence is that of Succinate--CoA ligase [ADP-forming] subunit beta from Shewanella baltica (strain OS195).